Consider the following 185-residue polypeptide: Large ribosomal subunit protein uL15 (185 aa).

Residues 1–51 are disordered; the sequence is MDLSSLRPAAGAVKNKKRVGRGQGSGNGTTAGKGNKGQQARSGYQKPINEG. Positions 21-35 are enriched in gly residues; the sequence is RGQGSGNGTTAGKGN.

This sequence belongs to the universal ribosomal protein uL15 family. As to quaternary structure, part of the 50S ribosomal subunit.

Binds to the 23S rRNA. The sequence is that of Large ribosomal subunit protein uL15 from Chlorobium phaeobacteroides (strain DSM 266 / SMG 266 / 2430).